The chain runs to 124 residues: CD59 glycoprotein (124 aa).

An N-terminal signal peptide occupies residues 1–24 (MTSRGVHLLLRLLFLLAVFYSSDS). The UPAR/Ly6 domain maps to 25-101 (SLMCYHCLLP…DLCNGPEDDG (77 aa)). 5 disulfides stabilise this stretch: Cys-28/Cys-51, Cys-31/Cys-38, Cys-44/Cys-64, Cys-70/Cys-88, and Cys-89/Cys-94. The N-linked (GlcNAc...) asparagine glycan is linked to Asn-37. Gly-101 carries GPI-anchor amidated glycine lipidation. A propeptide spans 102–124 (TALTGRTVLLVAPLLAAARNLCL) (removed in mature form).

As to quaternary structure, interacts with T-cell surface antigen CD2. In terms of processing, N- and O-glycosylated.

It localises to the cell membrane. It is found in the secreted. Potent inhibitor of the complement membrane attack complex (MAC) action, which protects self-cells from damage during complement activation. Acts by binding to the beta-haipins of C8 (C8A and C8B) components of the assembling MAC, forming an intermolecular beta-sheet that prevents incorporation of the multiple copies of C9 required for complete formation of the osmolytic pore. This chain is CD59 glycoprotein, found in Oryctolagus cuniculus (Rabbit).